The primary structure comprises 155 residues: Ribosome maturation factor RimP (155 aa).

The protein belongs to the RimP family.

Its subcellular location is the cytoplasm. Functionally, required for maturation of 30S ribosomal subunits. The protein is Ribosome maturation factor RimP of Prochlorococcus marinus (strain MIT 9301).